Here is a 751-residue protein sequence, read N- to C-terminus: Glutathione biosynthesis bifunctional protein GshAB (751 aa).

Positions 1–336 (MELDAVGKAI…QADQLTRQVL (336 aa)) are glutamate--cysteine ligase.

In the N-terminal section; belongs to the glutamate--cysteine ligase type 1 family. Type 2 subfamily. Monomer.

It catalyses the reaction L-cysteine + L-glutamate + ATP = gamma-L-glutamyl-L-cysteine + ADP + phosphate + H(+). The catalysed reaction is gamma-L-glutamyl-L-cysteine + glycine + ATP = glutathione + ADP + phosphate + H(+). It participates in sulfur metabolism; glutathione biosynthesis; glutathione from L-cysteine and L-glutamate: step 1/2. It functions in the pathway sulfur metabolism; glutathione biosynthesis; glutathione from L-cysteine and L-glutamate: step 2/2. In terms of biological role, synthesizes glutathione from L-glutamate and L-cysteine via gamma-L-glutamyl-L-cysteine. The polypeptide is Glutathione biosynthesis bifunctional protein GshAB (gshAB) (Lactiplantibacillus plantarum (strain ATCC BAA-793 / NCIMB 8826 / WCFS1) (Lactobacillus plantarum)).